A 217-amino-acid chain; its full sequence is 3-demethoxyubiquinol 3-hydroxylase (217 aa).

The Fe cation site is built by Glu66, Glu96, His99, Glu148, Glu180, and His183.

This sequence belongs to the COQ7 family. Fe cation is required as a cofactor.

It is found in the cell membrane. It carries out the reaction a 5-methoxy-2-methyl-3-(all-trans-polyprenyl)benzene-1,4-diol + AH2 + O2 = a 3-demethylubiquinol + A + H2O. It participates in cofactor biosynthesis; ubiquinone biosynthesis. In terms of biological role, catalyzes the hydroxylation of 2-nonaprenyl-3-methyl-6-methoxy-1,4-benzoquinol during ubiquinone biosynthesis. In Xylella fastidiosa (strain Temecula1 / ATCC 700964), this protein is 3-demethoxyubiquinol 3-hydroxylase.